Consider the following 318-residue polypeptide: Ubiquitin-like domain-containing CTD phosphatase 1 (318 aa).

An N-acetylalanine modification is found at Ala-2. One can recognise a Ubiquitin-like domain in the interval 3–81; that stretch reads LPIIVKWGGQ…IMMMGTREES (79 aa). At Lys-117 the chain carries N6-acetyllysine. The FCP1 homology domain maps to 133–294; sequence PREGKKLLVL…LKLTQYLKEI (162 aa). 3 residues coordinate Mg(2+): Asp-143, Asp-145, and Asp-253.

Requires Mg(2+) as cofactor.

The protein resides in the nucleus. It carries out the reaction O-phospho-L-seryl-[protein] + H2O = L-seryl-[protein] + phosphate. It catalyses the reaction O-phospho-L-threonyl-[protein] + H2O = L-threonyl-[protein] + phosphate. In terms of biological role, dephosphorylates 26S nuclear proteasomes, thereby decreasing their proteolytic activity. Recruited to the 19S regulatory particle of the 26S proteasome through its interaction with 19S component PSMD2/RPN1. Once recruited, dephosphorylates 19S component PSMC2/RPT1 which impairs PSMC2 ATPase activity and disrupts 26S proteasome assembly. Has also been reported to stimulate the proteolytic activity of the 26S proteasome. In Pongo abelii (Sumatran orangutan), this protein is Ubiquitin-like domain-containing CTD phosphatase 1 (UBLCP1).